A 222-amino-acid polypeptide reads, in one-letter code: Pyridoxine/pyridoxamine 5'-phosphate oxidase (222 aa).

Substrate contacts are provided by residues 11 to 14 (RVEY) and K79. Residues 74 to 79 (RTVLCK), 89 to 90 (YT), K96, and Q118 contribute to the FMN site. Y136, R140, and S144 together coordinate substrate. FMN contacts are provided by residues 153 to 154 (QS) and W199. Residue 205–207 (RVH) participates in substrate binding. Residue R209 coordinates FMN.

The protein belongs to the pyridoxamine 5'-phosphate oxidase family. In terms of assembly, homodimer. FMN serves as cofactor.

It carries out the reaction pyridoxamine 5'-phosphate + O2 + H2O = pyridoxal 5'-phosphate + H2O2 + NH4(+). The enzyme catalyses pyridoxine 5'-phosphate + O2 = pyridoxal 5'-phosphate + H2O2. Its pathway is cofactor metabolism; pyridoxal 5'-phosphate salvage; pyridoxal 5'-phosphate from pyridoxamine 5'-phosphate: step 1/1. The protein operates within cofactor metabolism; pyridoxal 5'-phosphate salvage; pyridoxal 5'-phosphate from pyridoxine 5'-phosphate: step 1/1. Its function is as follows. Catalyzes the oxidation of either pyridoxine 5'-phosphate (PNP) or pyridoxamine 5'-phosphate (PMP) into pyridoxal 5'-phosphate (PLP). The polypeptide is Pyridoxine/pyridoxamine 5'-phosphate oxidase (Mycolicibacterium vanbaalenii (strain DSM 7251 / JCM 13017 / BCRC 16820 / KCTC 9966 / NRRL B-24157 / PYR-1) (Mycobacterium vanbaalenii)).